We begin with the raw amino-acid sequence, 380 residues long: MVDQKKFNERINDLVEEAEEKPVRRAKKEKPNLKESIYSFQPHQLEDWLKENGEKPFRAAQIFDWLYNKRVKTFEEMSNLSKGLRDKLAANFALSTLSTIIKQESKDGTIKFLFQLQDGYSIETVLMRHEYGNSVCVTTQVGCRIGCTFCASTLGGLKRHLLAGEIVEQVVKVQQTLDEVNERVSHIVIMGIGEPFDNYDAMMNFLKVINHEKGLNIGARHITVSTSGIVPKIYQFADEQLQINFAVSLHAPNQEARQKLMPIARAYKLDELMEAVRYYTKKTGRRVSFEYGLMSGENDSVEIAEELSALIKGIKCHVNLIPVNYVPERDYVRTSRSQIFAFEKTLKKNGINVTIRREQGSDIAAACGQLRAQERSEETR.

Catalysis depends on glutamate 123, which acts as the Proton acceptor. One can recognise a Radical SAM core domain in the interval 129–362; that stretch reads HEYGNSVCVT…VTIRREQGSD (234 aa). An intrachain disulfide couples cysteine 136 to cysteine 367. [4Fe-4S] cluster is bound by residues cysteine 143, cysteine 147, and cysteine 150. S-adenosyl-L-methionine-binding positions include 193–194, serine 225, 248–250, and asparagine 324; these read GE and SLH. Residue cysteine 367 is the S-methylcysteine intermediate of the active site.

Belongs to the radical SAM superfamily. RlmN family. The cofactor is [4Fe-4S] cluster.

Its subcellular location is the cytoplasm. It catalyses the reaction adenosine(2503) in 23S rRNA + 2 reduced [2Fe-2S]-[ferredoxin] + 2 S-adenosyl-L-methionine = 2-methyladenosine(2503) in 23S rRNA + 5'-deoxyadenosine + L-methionine + 2 oxidized [2Fe-2S]-[ferredoxin] + S-adenosyl-L-homocysteine. The enzyme catalyses adenosine(37) in tRNA + 2 reduced [2Fe-2S]-[ferredoxin] + 2 S-adenosyl-L-methionine = 2-methyladenosine(37) in tRNA + 5'-deoxyadenosine + L-methionine + 2 oxidized [2Fe-2S]-[ferredoxin] + S-adenosyl-L-homocysteine. In terms of biological role, specifically methylates position 2 of adenine 2503 in 23S rRNA and position 2 of adenine 37 in tRNAs. This is Probable dual-specificity RNA methyltransferase RlmN from Lysinibacillus sphaericus (strain C3-41).